The primary structure comprises 353 residues: Pleckstrin-2 (353 aa).

Met-1 carries the N-acetylmethionine modification. The region spanning 4 to 104 (GVLKEGFLVK…WAFEITGAIH (101 aa)) is the PH 1 domain. Ser-120 carries the phosphoserine modification. In terms of domain architecture, DEP spans 139-225 (SNTGIRSSPN…DSTALYTFAE (87 aa)). Positions 247–353 (TVVKQGYLAK…EWIEAIKKLT (107 aa)) constitute a PH 2 domain.

The protein localises to the cell projection. Its subcellular location is the lamellipodium membrane. The protein resides in the cytoplasm. It localises to the cytoskeleton. In terms of biological role, may help orchestrate cytoskeletal arrangement. Contribute to lamellipodia formation. This is Pleckstrin-2 (PLEK2) from Homo sapiens (Human).